The following is a 1220-amino-acid chain: Protein transport protein Sec31A (1220 aa).

WD repeat units lie at residues 4–47, 68–111, 120–160, 166–206, 209–254, 258–298, and 301–342; these read KEVD…EIFE, RYHK…AGDK, KHTG…TPMT, QPPE…PIIK, DHSN…SPLR, NHAR…VLYE, and TNTQ…DGLR. The interaction with SEC13 stretch occupies residues 161–471; sequence PGAKTQPPED…IDASQTEFEK (311 aa). One copy of the WD 8; interaction with SEC13 repeat lies at 397–430; the sequence is SFSFGGKLVTFENVRMPSHQGAEQQQQQHHVFIS. A phosphoserine mark is found at Ser527 and Ser532. A Glycyl lysine isopeptide (Lys-Gly) (interchain with G-Cter in ubiquitin) cross-link involves residue Lys647. Disordered stretches follow at residues 791–908 and 924–1096; these read GEPV…NAYP and QLYA…GNTF. Ser799 carries the post-translational modification Phosphoserine. Positions 800-1113 are interaction with PDCD6; it reads PKIPYEKQQL…TKKITKKPIP (314 aa). Residues 842 to 848 carry the ALG-2-binding site motif-2 (ABS-2) motif; it reads GFIMHGN. The span at 849 to 859 shows a compositional bias: polar residues; it reads VNPNAAGQLPT. The segment covering 869–882 has biased composition (pro residues); the sequence is PPYPQPQPYQPAQP. Positions 962–972 are enriched in low complexity; it reads PSSSAYALPPG. Composition is skewed to polar residues over residues 984-995 and 1031-1053; these read PASQRTGPQNGW and PQSQ…SSFP. Position 1161 is a phosphothreonine (Thr1161). Position 1163 is a phosphoserine (Ser1163). Residue Lys1217 forms a Glycyl lysine isopeptide (Lys-Gly) (interchain with G-Cter in ubiquitin) linkage.

Belongs to the WD repeat SEC31 family. In terms of assembly, COPII is composed of at least 5 proteins: the SEC23/24 complex, the SEC13/31 complex and SAR1. SEC13 and SEC31 make a 2:2 tetramer that forms the edge element of the COPII outer coat. The tetramer self-assembles in multiple copies to form the complete polyhedral cage. Interacts (via WD 8) with SEC13. Interacts with PDCD6; interaction takes place in response to cytosolic calcium increase and leads to bridge together the BCR(KLHL12) complex and SEC31A, leading to monoubiquitination. Interacts with KLHL12. Monoubiquitinated by the BCR(KLHL12) E3 ubiquitin ligase complex, leading to regulate the size of COPII coats. Abundantly and ubiquitously expressed.

It is found in the cytoplasm. The protein resides in the cytoplasmic vesicle. The protein localises to the COPII-coated vesicle membrane. Its subcellular location is the endoplasmic reticulum membrane. It localises to the cytosol. Component of the coat protein complex II (COPII) which promotes the formation of transport vesicles from the endoplasmic reticulum (ER). The coat has two main functions, the physical deformation of the endoplasmic reticulum membrane into vesicles and the selection of cargo molecules. This Homo sapiens (Human) protein is Protein transport protein Sec31A (SEC31A).